The chain runs to 256 residues: MALKLLKKLLFDRPLKNGVILNHQYKIEECLGMGGYGLVYLCTDILAQTPYVLKQLRPTKAKKEKEKVRFQQEIKLLKNIHHPQIPGFIDEFIIDGQAYYVMQFIEGENIEELLFFRKQPFTELMALQLISQLLEIIEYLHDRLIFHSDIRTPNIIINDGRLCLIDFGLAKQLTPEEMEEIKVRKQDDFFDLGETLLFLLYSQYKGKKKKNGTWLEELTLTKEVTLLLKRLLGIEEEYQHTASIREDLNRAIQSVT.

The region spanning 25-256 (YKIEECLGMG…DLNRAIQSVT (232 aa)) is the Protein kinase domain. ATP contacts are provided by residues 31–39 (LGMGGYGLV) and K54. D149 (proton acceptor) is an active-site residue.

This sequence belongs to the protein kinase superfamily. Ser/Thr protein kinase family.

The enzyme catalyses L-seryl-[protein] + ATP = O-phospho-L-seryl-[protein] + ADP + H(+). It carries out the reaction L-threonyl-[protein] + ATP = O-phospho-L-threonyl-[protein] + ADP + H(+). This chain is Probable serine/threonine-protein kinase YbdM (ybdM), found in Bacillus subtilis (strain 168).